The chain runs to 163 residues: ATP synthase subunit b (163 aa).

A helical membrane pass occupies residues Val-10–Tyr-29.

Belongs to the ATPase B chain family. In terms of assembly, F-type ATPases have 2 components, F(1) - the catalytic core - and F(0) - the membrane proton channel. F(1) has five subunits: alpha(3), beta(3), gamma(1), delta(1), epsilon(1). F(0) has three main subunits: a(1), b(2) and c(10-14). The alpha and beta chains form an alternating ring which encloses part of the gamma chain. F(1) is attached to F(0) by a central stalk formed by the gamma and epsilon chains, while a peripheral stalk is formed by the delta and b chains.

The protein resides in the cell membrane. Its function is as follows. F(1)F(0) ATP synthase produces ATP from ADP in the presence of a proton or sodium gradient. F-type ATPases consist of two structural domains, F(1) containing the extramembraneous catalytic core and F(0) containing the membrane proton channel, linked together by a central stalk and a peripheral stalk. During catalysis, ATP synthesis in the catalytic domain of F(1) is coupled via a rotary mechanism of the central stalk subunits to proton translocation. Functionally, component of the F(0) channel, it forms part of the peripheral stalk, linking F(1) to F(0). This chain is ATP synthase subunit b, found in Desulforudis audaxviator (strain MP104C).